The chain runs to 83 residues: Small ribosomal subunit protein bS18 (83 aa).

This sequence belongs to the bacterial ribosomal protein bS18 family. As to quaternary structure, part of the 30S ribosomal subunit. Forms a tight heterodimer with protein bS6.

Its function is as follows. Binds as a heterodimer with protein bS6 to the central domain of the 16S rRNA, where it helps stabilize the platform of the 30S subunit. This chain is Small ribosomal subunit protein bS18, found in Methylobacterium radiotolerans (strain ATCC 27329 / DSM 1819 / JCM 2831 / NBRC 15690 / NCIMB 10815 / 0-1).